A 219-amino-acid chain; its full sequence is Protein P25 (219 aa).

Residues 57 to 62 carry the Nuclear localization signal motif; sequence KRIRFR. The interval 103 to 146 is transcription activation; that stretch reads DPTRLDSSVNELLVSNGLVTHYDRVHNVPIHTDGFEVVDFTTVF. A Nuclear export signal motif is present at residues 169-178; it reads VYMVCLVNTV.

It belongs to the benyvirus P25 protein family. As to quaternary structure, homooligomer.

Its subcellular location is the host cytoplasm. It is found in the host nucleus. Pathogenicity factor implicated in symptom exacerbation. Might function as transcription activator (Potential). The chain is Protein P25 from Beet necrotic yellow vein virus (isolate Japan/S) (BNYVV).